Consider the following 515-residue polypeptide: Na(+)/H(+) antiporter NhaB (515 aa).

Transmembrane regions (helical) follow at residues 23–43 (IIVF…FIAG), 44–64 (WCLV…YPLQ), 88–108 (IMAS…IYFM), 119–139 (LLIT…SAAF), 143–163 (FLDA…FYGV), 202–222 (LMMH…VGEP), 238–258 (FFIR…ITCV), 303–323 (GIIG…VGLI), 324–344 (GLSV…STIG), 357–377 (LVVF…GPII), 389–409 (LLLF…VFVA), 447–467 (ATPN…APLI), and 477–497 (MALP…EYIL).

It belongs to the NhaB Na(+)/H(+) (TC 2.A.34) antiporter family.

Its subcellular location is the cell inner membrane. The enzyme catalyses 2 Na(+)(in) + 3 H(+)(out) = 2 Na(+)(out) + 3 H(+)(in). Functionally, na(+)/H(+) antiporter that extrudes sodium in exchange for external protons. The sequence is that of Na(+)/H(+) antiporter NhaB from Mannheimia succiniciproducens (strain KCTC 0769BP / MBEL55E).